We begin with the raw amino-acid sequence, 309 residues long: Taste receptor type 2 member 31 (309 aa).

The Extracellular portion of the chain corresponds to 1–2 (MT). The helical transmembrane segment at 3–23 (TFIPIIFSSLVVVIFVIGNFA) threads the bilayer. Residues 24–55 (NGFIALVNSIEWFKRQKISFADQILTALAVSR) lie on the Cytoplasmic side of the membrane. The chain crosses the membrane as a helical span at residues 56–76 (VGLLWVLLLNWYSTVLNPAFY). Over 77–100 (SVEVRTTAYNVWAVTGHFSNWLAT) the chain is Extracellular. The chain crosses the membrane as a helical span at residues 101-121 (SLSIFYLLKIANFSNLIFLHL). The Cytoplasmic portion of the chain corresponds to 122–126 (KRRVK). Residues 127–147 (SVILVMLLGPLLFLACQLFMI) form a helical membrane-spanning segment. Topologically, residues 148–181 (NMKEIVRTKEYEGNMTWKIKLRSAVYLSDATVTT) are extracellular. Asn161 carries N-linked (GlcNAc...) asparagine glycosylation. Residues 182-202 (LGNLVPFTLTLLCFLLLICSL) form a helical membrane-spanning segment. Residues 203–229 (CKHLKKMQLHGKGSQDPSTKVHIKVLQ) are Cytoplasmic-facing. The helical transmembrane segment at 230–250 (TVISFLLLCAIYFLSIMISVW) threads the bilayer. Over 251–259 (SFGSLKNKP) the chain is Extracellular. Residues 260–280 (VFMFCKAMRFSYPSIHPFILI) traverse the membrane as a helical segment. Over 281 to 309 (WGNKKLKQTFLSVLRQVRYWVKGEKPSSP) the chain is Cytoplasmic.

It belongs to the G-protein coupled receptor T2R family.

The protein resides in the membrane. In terms of biological role, receptor that may play a role in the perception of bitterness and is gustducin-linked. May play a role in sensing the chemical composition of the gastrointestinal content. The activity of this receptor may stimulate alpha gustducin, mediate PLC-beta-2 activation and lead to the gating of TRPM5. This is Taste receptor type 2 member 31 (TAS2R31) from Pan troglodytes (Chimpanzee).